We begin with the raw amino-acid sequence, 109 residues long: Large ribosomal subunit protein uL24 (109 aa).

This sequence belongs to the universal ribosomal protein uL24 family. In terms of assembly, part of the 50S ribosomal subunit.

In terms of biological role, one of two assembly initiator proteins, it binds directly to the 5'-end of the 23S rRNA, where it nucleates assembly of the 50S subunit. Its function is as follows. One of the proteins that surrounds the polypeptide exit tunnel on the outside of the subunit. The chain is Large ribosomal subunit protein uL24 from Mesoplasma florum (strain ATCC 33453 / NBRC 100688 / NCTC 11704 / L1) (Acholeplasma florum).